We begin with the raw amino-acid sequence, 632 residues long: Epithelial sodium channel subunit alpha (632 aa).

The Cytoplasmic segment spans residues 1 to 49; sequence MTKEEKNEKEALIEFFSSYRELFEFFCSNTTIHGAIRLVCSRRNRMKTA. A helical transmembrane segment spans residues 50 to 70; sequence FWLVLFLVTFGLMYWQFGLLF. Residues 71 to 520 lie on the Extracellular side of the membrane; sequence GQYFSYPVSI…SQWSLWFGSS (450 aa). Intrachain disulfides connect C97–C264, C189–C196, C241–C248, C355–C440, C377–C417, C377–C436, C381–C432, C390–C417, C390–C440, and C392–C406. A helical membrane pass occupies residues 521–541; sequence VLSVVEMLELVIDFVIIGVMI. The Cytoplasmic segment spans residues 542 to 632; it reads LLHRYYYKKA…YYEENGGRRN (91 aa). Positions 612–622 are enriched in low complexity; that stretch reads SRSSSMRSNRS. Residues 612–632 form a disordered region; that stretch reads SRSSSMRSNRSYYEENGGRRN. Residues 623 to 632 are compositionally biased toward basic and acidic residues; the sequence is YYEENGGRRN.

Belongs to the amiloride-sensitive sodium channel (TC 1.A.6) family. SCNN1A subfamily. In terms of assembly, heterotrimer; containing an alpha/SCNN1A, a beta/SCNN1B and a gamma/SCNN1G subunit. Interacts with shroom1.

It is found in the apical cell membrane. The protein resides in the cell projection. Its subcellular location is the cilium. It localises to the cytoplasmic granule. The protein localises to the cytoplasm. It is found in the cytoplasmic vesicle. The protein resides in the secretory vesicle. Its subcellular location is the acrosome. It localises to the flagellum. It carries out the reaction Na(+)(in) = Na(+)(out). Its activity is regulated as follows. Originally identified and characterized by its inhibition by the diuretic drug amiloride. Its function is as follows. This is one of the three pore-forming subunits of the heterotrimeric epithelial sodium channel (ENaC), a critical regulator of sodium balance and fluid homeostasis. ENaC operates in epithelial tissues, where it mediates the electrodiffusion of sodium ions from extracellular fluid through the apical membrane of cells, with water following osmotically. It plays a key role in maintaining sodium homeostasis through electrogenic sodium reabsorption in the kidneys. The sequence is that of Epithelial sodium channel subunit alpha from Xenopus laevis (African clawed frog).